The chain runs to 352 residues: MHLYFSCFILLFVPGGKSLGINSHLKHMSNKSQDQVNRTRTVGSKDVAALPLSSYMFNLYQSFHHSELNHGMEAAPSLSLNHRADIIRSLAVKSYDHGGSLWTFLFDFSSLSQEEEHQFAEVRFDFRAFSDAILVGMEVIVDFFHQSSTCQSISGFCQSYLYVGSLTSTLWPRSSDTWVTFEATDIIHKWFERNDKGKNHSEGHMKQPKKLHRAKSAERRYQQRSTENPQILMMVYSNISKKEKLSGTATLLQDAAHSKYLAVMPGIQTIANSRRHRRSHIFNEHIMGMKHVPSADSSRTLCRRVDFFVDFKQIGWDSWIIHPVKYNAYRCEGECPSPVNERLKPNNHAYMQ.

The N-terminal stretch at M1–S18 is a signal peptide. Positions L19–R278 are excised as a propeptide. N30, N37, N199, and N238 each carry an N-linked (GlcNAc...) asparagine glycan. The tract at residues G197–Q223 is disordered.

This sequence belongs to the TGF-beta family. As to quaternary structure, homodimer; disulfide-linked.

Its subcellular location is the secreted. Cooperation and regulatory loops of multiple nodals are essential for mesendoderm patterning in early embryos. Plays a role in mesoderm formation and may be required for neural development. The protein is Nodal homolog 4-B (nodal4-b) of Xenopus laevis (African clawed frog).